We begin with the raw amino-acid sequence, 145 residues long: uncharacterized protein (145 aa).

This is an uncharacterized protein from Sinorhizobium fredii (strain NBRC 101917 / NGR234).